A 184-amino-acid chain; its full sequence is ATP synthase subunit b, chloroplastic (184 aa).

A helical membrane pass occupies residues 27 to 49 (LATNPINLSVVLGVLIFFGKGVL).

Belongs to the ATPase B chain family. As to quaternary structure, F-type ATPases have 2 components, F(1) - the catalytic core - and F(0) - the membrane proton channel. F(1) has five subunits: alpha(3), beta(3), gamma(1), delta(1), epsilon(1). F(0) has four main subunits: a(1), b(1), b'(1) and c(10-14). The alpha and beta chains form an alternating ring which encloses part of the gamma chain. F(1) is attached to F(0) by a central stalk formed by the gamma and epsilon chains, while a peripheral stalk is formed by the delta, b and b' chains.

The protein localises to the plastid. The protein resides in the chloroplast thylakoid membrane. Functionally, f(1)F(0) ATP synthase produces ATP from ADP in the presence of a proton or sodium gradient. F-type ATPases consist of two structural domains, F(1) containing the extramembraneous catalytic core and F(0) containing the membrane proton channel, linked together by a central stalk and a peripheral stalk. During catalysis, ATP synthesis in the catalytic domain of F(1) is coupled via a rotary mechanism of the central stalk subunits to proton translocation. In terms of biological role, component of the F(0) channel, it forms part of the peripheral stalk, linking F(1) to F(0). The sequence is that of ATP synthase subunit b, chloroplastic from Nicotiana sylvestris (Wood tobacco).